The chain runs to 199 residues: Photosystem I reaction center subunit XI (199 aa).

The next 2 helical transmembrane spans lie at 108-128 (LTAG…LLVL) and 165-185 (FWLG…TLHL).

It belongs to the PsaL family.

It localises to the cellular thylakoid membrane. This chain is Photosystem I reaction center subunit XI, found in Prochlorococcus marinus (strain AS9601).